The following is a 315-amino-acid chain: Tyrosine--tRNA ligase (315 aa).

Tyrosine 32 provides a ligand contact to L-tyrosine. Positions 37–45 match the 'HIGH' region motif; that stretch reads PSGEIHLGH. Residues tyrosine 152, glutamine 156, aspartate 159, and glutamine 174 each contribute to the L-tyrosine site. Residues 208 to 212 carry the 'KMSKS' region motif; sequence KMSSS. An ATP-binding site is contributed by serine 211.

It belongs to the class-I aminoacyl-tRNA synthetase family. TyrS type 3 subfamily. In terms of assembly, homodimer.

It localises to the cytoplasm. It catalyses the reaction tRNA(Tyr) + L-tyrosine + ATP = L-tyrosyl-tRNA(Tyr) + AMP + diphosphate + H(+). Catalyzes the attachment of tyrosine to tRNA(Tyr) in a two-step reaction: tyrosine is first activated by ATP to form Tyr-AMP and then transferred to the acceptor end of tRNA(Tyr). This is Tyrosine--tRNA ligase from Methanoculleus marisnigri (strain ATCC 35101 / DSM 1498 / JR1).